The sequence spans 396 residues: S-arrestin (396 aa).

Residues 375 to 386 (ARDPLKGELQAE) are compositionally biased toward basic and acidic residues. The interval 375 to 396 (ARDPLKGELQAEEKEEEEDDEK) is disordered. The span at 387-396 (EKEEEEDDEK) shows a compositional bias: acidic residues.

Belongs to the arrestin family. In terms of assembly, interacts with RHO (via the phosphorylated C-terminus).

It localises to the cell projection. Its subcellular location is the cilium. The protein resides in the photoreceptor outer segment. The protein localises to the membrane. Binds to photoactivated, phosphorylated RHO and terminates RHO signaling via G-proteins by competing with G-proteins for the same binding site on RHO. May play a role in preventing light-dependent degeneration of retinal photoreceptor cells. This Xenopus laevis (African clawed frog) protein is S-arrestin (sag).